Reading from the N-terminus, the 98-residue chain is NADH-ubiquinone oxidoreductase chain 4L (98 aa).

The next 3 helical transmembrane spans lie at 1–21 (MSLA…GLLM), 25–45 (HLMS…VMAT), and 59–81 (MPII…LVMV).

Belongs to the complex I subunit 4L family. Core subunit of respiratory chain NADH dehydrogenase (Complex I) which is composed of 45 different subunits.

It is found in the mitochondrion inner membrane. It carries out the reaction a ubiquinone + NADH + 5 H(+)(in) = a ubiquinol + NAD(+) + 4 H(+)(out). Its function is as follows. Core subunit of the mitochondrial membrane respiratory chain NADH dehydrogenase (Complex I) which catalyzes electron transfer from NADH through the respiratory chain, using ubiquinone as an electron acceptor. Part of the enzyme membrane arm which is embedded in the lipid bilayer and involved in proton translocation. The sequence is that of NADH-ubiquinone oxidoreductase chain 4L (MT-ND4L) from Equus asinus (Donkey).